Reading from the N-terminus, the 542-residue chain is Phosphoacetylglucosamine mutase (542 aa).

An N-acetylmethionine modification is found at Met-1. Phosphothreonine is present on Thr-62. Ser-64 functions as the Phosphoserine intermediate in the catalytic mechanism. Positions 64, 276, 278, and 280 each coordinate Mg(2+). A Phosphoserine modification is found at Ser-64. Residues 370-372 (EAN), 496-500 (RPSGT), and Arg-505 each bind substrate.

Belongs to the phosphohexose mutase family. Mg(2+) serves as cofactor.

It carries out the reaction N-acetyl-alpha-D-glucosamine 1-phosphate = N-acetyl-D-glucosamine 6-phosphate. It functions in the pathway nucleotide-sugar biosynthesis; UDP-N-acetyl-alpha-D-glucosamine biosynthesis; N-acetyl-alpha-D-glucosamine 1-phosphate from alpha-D-glucosamine 6-phosphate (route I): step 2/2. Catalyzes the conversion of GlcNAc-6-P into GlcNAc-1-P during the synthesis of uridine diphosphate/UDP-GlcNAc, a sugar nucleotide critical to multiple glycosylation pathways including protein N- and O-glycosylation. The sequence is that of Phosphoacetylglucosamine mutase from Mus musculus (Mouse).